Consider the following 38-residue polypeptide: Large ribosomal subunit protein bL36 (38 aa).

The protein belongs to the bacterial ribosomal protein bL36 family.

The chain is Large ribosomal subunit protein bL36 from Porphyromonas gingivalis (strain ATCC 33277 / DSM 20709 / CIP 103683 / JCM 12257 / NCTC 11834 / 2561).